We begin with the raw amino-acid sequence, 363 residues long: MATLRRLQEAPRHLLVCEKSNFGHDKSRHKHLVETHYHNYRVSFLIPECGLLSKELKSLVMDIGPYYSVKNLPLHELITHEFINTFVKKGSFSALTYNTSIDEDNTVALLPNGKLILSLDKDTYEETGLQGRPSRYSGRKSMKFVISIDLMDLSLNLDSKKYRRISWSFKEKKPLKFDFLLAWHPTGTEESTMMSYFSKYQIQEHQPKVALSTVRELQCPVLRSSGLAGEPEEACSALEFFDWLGAVFCSADLNNEPYNFISTYCCPQPSAVVAQAFLCTITGFILPEKIHVLLEQLCHYFDEPKLAPWVTLTVQGFADSPVAWREKEHGFHKGGEHLYNFVVFNNQDYWLQMAVGANDDCPP.

Component of nuclear RNase P and RNase MRP ribonucleoproteins. RNase P consists of a catalytic RNA moiety and about 10 protein subunits; POP1, POP4, POP5, POP7, RPP14, RPP21, RPP25, RPP30, RPP38 and RPP40. Within the RNase P complex, POP1, POP7 and RPP25 form the 'finger' subcomplex, POP5, RPP14, RPP40 and homodimeric RPP30 form the 'palm' subcomplex, and RPP21, POP4 and RPP38 form the 'wrist' subcomplex. All subunits of the RNase P complex interact with the catalytic RNA. Several subunits of RNase P are also part of the RNase MRP complex. RNase MRP consists of a catalytic RNA moiety and about 8 protein subunits; POP1, POP7, RPP25, RPP30, RPP38, RPP40 and possibly also POP4 and POP5.

It is found in the nucleus. It localises to the nucleolus. Functionally, component of ribonuclease P, a ribonucleoprotein complex that generates mature tRNA molecules by cleaving their 5'-ends. Also a component of the MRP ribonuclease complex, which cleaves pre-rRNA sequences. This Mus musculus (Mouse) protein is Ribonuclease P protein subunit p40 (Rpp40).